Consider the following 269-residue polypeptide: NAD kinase (269 aa).

Asp45 functions as the Proton acceptor in the catalytic mechanism. NAD(+)-binding positions include 45–46 (DG), 122–123 (NE), Arg149, Asp151, and Ala186.

This sequence belongs to the NAD kinase family. A divalent metal cation is required as a cofactor.

The protein resides in the cytoplasm. It carries out the reaction NAD(+) + ATP = ADP + NADP(+) + H(+). Involved in the regulation of the intracellular balance of NAD and NADP, and is a key enzyme in the biosynthesis of NADP. Catalyzes specifically the phosphorylation on 2'-hydroxyl of the adenosine moiety of NAD to yield NADP. In Staphylococcus aureus (strain Mu3 / ATCC 700698), this protein is NAD kinase.